Here is a 998-residue protein sequence, read N- to C-terminus: RNA-directed RNA polymerase (998 aa).

The chain crosses the membrane as a helical span at residues 21–43 (IVIVSGCGAVAYCISKFWGYGAI). The tract at residues 44–998 (APYPQSGGNR…AQPGAPTNPK (955 aa)) is cytoplasmic. Residues 91 to 282 (NGHAVSGAVR…LVYTIPQHTV (192 aa)) are capping. Aspartate 692 acts as the For RdRp/TNTase activity in catalysis. Positions 901 to 998 (AKQTRSNSGT…AQPGAPTNPK (98 aa)) are disordered. A compositionally biased stretch (low complexity) spans 985-998 (PKAGAQPGAPTNPK).

It belongs to the nodaviridae RNA polymerase family. As to quaternary structure, homododecamer. Forms 2 stacked rings of 35-nm in diameter, arranged in a crown-like structure at the opening of virus-induced replication vesicles. Interacts with protein B2. Mn(2+) is required as a cofactor.

It localises to the host mitochondrion outer membrane. The catalysed reaction is RNA(n) + a ribonucleoside 5'-triphosphate = RNA(n+1) + diphosphate. Its function is as follows. RNA-dependent RNA polymerase, which replicates the viral genome composed of 2 RNA segments, RNA1 and RNA2. Does not need an exogenous primer. Also possesses a terminal nucleotidyl transferase (TNTase) activity. The TNTase catalyzes the addition of nucleotide to the 3'-end of plus- and minus-stranded RNAs, probably to repair the 3'-end nucleotide loss. Forms the open necked connection to the cytosol of the virus-induced replication vesicles. Mediates viral RNA1 recruitment. The protein is RNA-directed RNA polymerase of Hepialidae (ghost moths).